The chain runs to 419 residues: O-antigen ligase (419 aa).

The Cytoplasmic segment spans residues M1–M19. A helical membrane pass occupies residues I20–V38. Over D39–S43 the chain is Periplasmic. The helical transmembrane segment at I44–R61 threads the bilayer. Over G62–N71 the chain is Cytoplasmic. A helical transmembrane segment spans residues L72–A91. Residues F92–L107 lie on the Periplasmic side of the membrane. The helical transmembrane segment at N108–T125 threads the bilayer. Residues S126–S134 lie on the Cytoplasmic side of the membrane. The helical transmembrane segment at V135–I153 threads the bilayer. Over N154–G167 the chain is Periplasmic. The chain crosses the membrane as a helical span at residues T168–I187. Residues L188–H194 are Cytoplasmic-facing. Residues P195–L211 traverse the membrane as a helical segment. The Periplasmic portion of the chain corresponds to T212–A216. Residues T217–N234 traverse the membrane as a helical segment. The Cytoplasmic segment spans residues K235–F240. The chain crosses the membrane as a helical span at residues T241–N259. Residues K260 to K348 lie on the Periplasmic side of the membrane. The chain crosses the membrane as a helical span at residues G349–A367. Residues Y368–A372 lie on the Cytoplasmic side of the membrane. The helical transmembrane segment at L373–I391 threads the bilayer. Topologically, residues I392 to S396 are periplasmic. A helical transmembrane segment spans residues I397–N412. Residues N413 to N419 are Cytoplasmic-facing.

In terms of assembly, homodimer.

The protein localises to the cell inner membrane. It carries out the reaction a lipid-linked O antigen + a lipid A-core oligosaccharide = a lipopolysaccharide + a polyisoprenyl diphosphate.. The protein operates within bacterial outer membrane biogenesis; lipopolysaccharide biosynthesis. Activity does not require ATP and magnesium ions. Transferase involved in the biosynthesis of the lipopolysaccharide (LPS). In vitro, catalyzes the transfer of a polymerized O-antigen molecule from its polyprenyl diphosphate membrane anchor to a terminal sugar of the lipid A-core oligosaccharide, finalizing the biosynthesis of the lipopolysaccharide. The enzyme is functional and can be used to give diverse hybrid O-antigens in vitro, but K12 strains do not produce the O-antigen in vivo due to mutations in the rfb gene cluster. K12 strains are phenotypically rough, their lipopolysaccharide having a complete core structure, but no O-antigen. In highly mucoid K12 strains, WaaL can ligate colanic acid (CA or M-antigen) repeats to a significant proportion of lipopolysaccharide (LPS) core acceptor molecules, forming the LPS glycoform M(LPS). The attachment point was identified as O-7 of the L-glycero-D-manno-heptose of the outer LPS core, the same position used for O-antigen ligation. Cannot catalyze ATP hydrolysis in vitro. The protein is O-antigen ligase of Escherichia coli (strain K12).